Consider the following 364-residue polypeptide: MGCPVSRGGSPGCGRRIAEELRFFVVDREASMCGDSCNGGGDRQQRQELAAAARASLLCLGGVMQQHITAAKARAELRKELDAIDAEWRPVIARESLRKELKAIDAQWQHAITFLRISRAIVVSIELSKELKAIDAGWEPVIIHEAQKKKREREERVAQVRRELRAELRAIDAEWRLVIARESLRKELDAIDAECRHTIKLRSALRAIEGRMELSKELKAIDAEWRPAIRLESAYRAIIGSIELSKELKAIDAETQHAVELRRALRTIEGRIELSRELKAIDAEWAPRIAQAELAAAADALKRAADKLQALGKMDTTSTPGTDLIGVVTTAIATLAAAGMQPAPSTALTGVAAEVATPSTALGV.

Coiled-coil stretches lie at residues 142–196 (IIHE…AECR) and 288–313 (RIAQ…ALGK).

It localises to the secreted. Associates with actin filament appendages that are formed in the inclusion appendages of the parasitophorous vacuole during infection of the host erythrocyte. In Anaplasma marginale (strain Illinois), this protein is Appendage-associated protein.